We begin with the raw amino-acid sequence, 544 residues long: E3 ubiquitin-protein ligase makorin-3 (544 aa).

Disordered stretches follow at residues 1-46 (MEES…VSSA) and 117-144 (DLSG…KMAT). Composition is skewed to low complexity over residues 9 to 19 (EAHAAAGAEAG) and 36 to 46 (AAGASAGVSSA). C3H1-type zinc fingers lie at residues 92 to 119 (WTKQ…HDLS) and 274 to 301 (PMPL…HGEI). The segment at 302 to 329 (CDMCGQQALHPWDAAQQEAHRRACVEAH) is makorin-type Cys-His. The segment at 347-401 (CGICMEVVYEKADPSDRRFGILFSCNHTYCLRCIRRWRSATQFENRISKSCPQCR) adopts an RING-type zinc-finger fold. Residues 430-459 (GMSQKACRYFAGGLGHCPFGEFCFYKHEYP) form a C3H1-type 3 zinc finger.

As to expression, mainly expressed in mouse brain and reproductive system including testis and ovary. Ubiquitously detected at low levels throughout the entire embryo, but expression is highest in the ventricular layers of the brain.

Its subcellular location is the nucleus. The catalysed reaction is S-ubiquitinyl-[E2 ubiquitin-conjugating enzyme]-L-cysteine + [acceptor protein]-L-lysine = [E2 ubiquitin-conjugating enzyme]-L-cysteine + N(6)-ubiquitinyl-[acceptor protein]-L-lysine.. The protein operates within protein modification; protein ubiquitination. In terms of biological role, E3 ubiquitin ligase catalyzing the covalent attachment of ubiquitin moieties onto substrate proteins. Acts as a key developmental timer that helps ensure puberty begins at the appropriate age, by inhibiting premature activation of the reproductive hormone cascade. Epigenetically regulates GNRH1 transcription by disrupting the binding of methyl-DNA binding protein 3/MBD3 to the promoter of GNRH1. Mechanistically, mediates the non-proteolytic ubiquitination of MBD3 at multiple sites with 'Lys27' ubiquitin linkages and thereby regulates the methylation status of the genome, including GNRH1 promoter. Modulates the stability and translation of GNRH1 mRNA by mediating the non-proteolytic ubiquitination of PABP family members PABPC1, PABPC3 and PABPC4 at multiple sites. Also participates in the maintenance of genomic and epigenomic stability by regulating the abundance of APEX2 via 'Lys-48'-linked ubiquitination. The chain is E3 ubiquitin-protein ligase makorin-3 (Mkrn3) from Mus musculus (Mouse).